The sequence spans 192 residues: Hydrophobin-like protein rodD (192 aa).

Intrachain disulfides connect Cys45–Cys106, Cys50–Cys99, and Cys107–Cys112.

Belongs to the fungal hydrophobin family. As to quaternary structure, self-assembles to form functional amyloid fibrils called rodlets. Self-assembly into fibrillar rodlets occurs spontaneously at hydrophobic:hydrophilic interfaces and the rodlets further associate laterally to form amphipathic monolayers.

Functionally, aerial growth, conidiation, and dispersal of filamentous fungi in the environment rely upon a capability of their secreting small amphipathic proteins called hydrophobins (HPBs) with low sequence identity. Class I can self-assemble into an outermost layer of rodlet bundles on aerial cell surfaces, conferring cellular hydrophobicity that supports fungal growth, development and dispersal; whereas Class II form highly ordered films at water-air interfaces through intermolecular interactions but contribute nothing to the rodlet structure. RodD is a an hydrophobin-like protein that, unlike rodA, is not required for rodlet formation. This chain is Hydrophobin-like protein rodD, found in Aspergillus fumigatus (strain ATCC MYA-4609 / CBS 101355 / FGSC A1100 / Af293) (Neosartorya fumigata).